Reading from the N-terminus, the 424-residue chain is Protein CLP1 homolog 5 (424 aa).

Residues glutamate 16, threonine 56, and 124–129 (DSGKST) each bind ATP.

This sequence belongs to the Clp1 family. Clp1 subfamily. In terms of assembly, forms a complex with cleavage and polyadenylation specificity factor (CPSF) subunits PCFS1, FIPS3 and CPSF30.

The protein localises to the nucleus. In terms of biological role, required for endonucleolytic cleavage during polyadenylation-dependent pre-mRNA 3'-end formation. The polypeptide is Protein CLP1 homolog 5 (Arabidopsis thaliana (Mouse-ear cress)).